Here is a 186-residue protein sequence, read N- to C-terminus: dCTP deaminase (186 aa).

Position 107-112 (107-112) interacts with dCTP; the sequence is KSTYAR. The active-site Proton donor/acceptor is the glutamate 133. DCTP-binding residues include glutamine 152, tyrosine 166, and glutamine 176.

This sequence belongs to the dCTP deaminase family. In terms of assembly, homotrimer.

It carries out the reaction dCTP + H2O + H(+) = dUTP + NH4(+). The protein operates within pyrimidine metabolism; dUMP biosynthesis; dUMP from dCTP (dUTP route): step 1/2. In terms of biological role, catalyzes the deamination of dCTP to dUTP. This is dCTP deaminase from Campylobacter lari (strain RM2100 / D67 / ATCC BAA-1060).